The following is a 108-amino-acid chain: Parvalbumin beta (108 aa).

2 EF-hand domains span residues 38–73 (KSTD…FSST) and 77–108 (LTAA…LVKA). Ca(2+) is bound by residues D51, D53, S55, F57, E59, E62, D90, D92, D94, K96, and E101.

It belongs to the parvalbumin family.

Its function is as follows. In muscle, parvalbumin is thought to be involved in relaxation after contraction. It binds two calcium ions. This chain is Parvalbumin beta, found in Graptemys geographica (Common map turtle).